A 129-amino-acid chain; its full sequence is uncharacterized protein (129 aa).

It to M.pneumoniae MPN_376 N-terminal region.

This is an uncharacterized protein from Mycoplasma pneumoniae (strain ATCC 29342 / M129 / Subtype 1) (Mycoplasmoides pneumoniae).